Consider the following 80-residue polypeptide: SPbeta prophage-derived thioredoxin-like protein YosR (80 aa).

The 80-residue stretch at 1 to 80 folds into the Thioredoxin domain; sequence MRLIKLEQPN…ELDELLKELR (80 aa). Cysteines 11 and 14 form a disulfide.

The protein belongs to the thioredoxin family.

This Bacillus subtilis (strain 168) protein is SPbeta prophage-derived thioredoxin-like protein YosR (yosR).